We begin with the raw amino-acid sequence, 776 residues long: Protein SEY1 (776 aa).

Residues 1–681 are Cytoplasmic-facing; sequence MADRPAIQLI…KRSIITTRTH (681 aa). Residues 34-263 enclose the GB1/RHD3-type G domain; the sequence is GLDYHVISVF…TENYYFKPQY (230 aa). 44-51 is a binding site for GTP; the sequence is GSQSSGKS. A helical membrane pass occupies residues 682 to 702; that stretch reads IPPWIYVLLAVLGWNEFVAVI. The Lumenal segment spans residues 703–705; it reads RNP. A helical transmembrane segment spans residues 706–726; sequence LFVTLTLILGATFFVIHKFGL. Topologically, residues 727–776 are cytoplasmic; that stretch reads WGPVVNVVQSAVGETRTAIKDKLRQFVVEDHEVKESFEMKDFSKNEQKEK.

This sequence belongs to the TRAFAC class dynamin-like GTPase superfamily. GB1/RHD3 GTPase family. RHD3 subfamily. Interacts with RTN1 and YOP1; GTP binding is not required for these interactions.

Its subcellular location is the endoplasmic reticulum membrane. Its function is as follows. Cooperates with the reticulon proteins RTN1 and RTN2 and the tubule-shaping DP1 family protein YOP1 to generate and maintain the structure of the tubular endoplasmic reticulum network. Has GTPase activity, which is required for its function in ER organization. In Saccharomyces cerevisiae (strain ATCC 204508 / S288c) (Baker's yeast), this protein is Protein SEY1.